The sequence spans 130 residues: Small ribosomal subunit protein uS9 (130 aa).

Residues arginine 109 to arginine 130 are disordered.

It belongs to the universal ribosomal protein uS9 family.

The protein is Small ribosomal subunit protein uS9 of Malacoplasma penetrans (strain HF-2) (Mycoplasma penetrans).